A 31-amino-acid chain; its full sequence is Cytochrome b6-f complex subunit 6 (31 aa).

A helical transmembrane segment spans residues 4 to 26 (ITSYFGFLLAALTITSALLIGLN).

It belongs to the PetL family. As to quaternary structure, the 4 large subunits of the cytochrome b6-f complex are cytochrome b6, subunit IV (17 kDa polypeptide, PetD), cytochrome f and the Rieske protein, while the 4 small subunits are PetG, PetL, PetM and PetN. The complex functions as a dimer.

The protein resides in the plastid. The protein localises to the chloroplast thylakoid membrane. Its function is as follows. Component of the cytochrome b6-f complex, which mediates electron transfer between photosystem II (PSII) and photosystem I (PSI), cyclic electron flow around PSI, and state transitions. PetL is important for photoautotrophic growth as well as for electron transfer efficiency and stability of the cytochrome b6-f complex. This Amborella trichopoda protein is Cytochrome b6-f complex subunit 6.